The primary structure comprises 694 residues: Elongation factor G (694 aa).

Residues 9-288 (DAIRNIGIMA…VIVKWLPSPL (280 aa)) form the tr-type G domain. GTP is bound by residues 18-25 (AHIDAGKT), 82-86 (DTPGH), and 136-139 (NKMD).

It belongs to the TRAFAC class translation factor GTPase superfamily. Classic translation factor GTPase family. EF-G/EF-2 subfamily.

The protein resides in the cytoplasm. Catalyzes the GTP-dependent ribosomal translocation step during translation elongation. During this step, the ribosome changes from the pre-translocational (PRE) to the post-translocational (POST) state as the newly formed A-site-bound peptidyl-tRNA and P-site-bound deacylated tRNA move to the P and E sites, respectively. Catalyzes the coordinated movement of the two tRNA molecules, the mRNA and conformational changes in the ribosome. In Chlamydia trachomatis serovar L2 (strain ATCC VR-902B / DSM 19102 / 434/Bu), this protein is Elongation factor G.